The chain runs to 187 residues: Ribosome-recycling factor (187 aa).

This sequence belongs to the RRF family.

Its subcellular location is the cytoplasm. Responsible for the release of ribosomes from messenger RNA at the termination of protein biosynthesis. May increase the efficiency of translation by recycling ribosomes from one round of translation to another. This Ruegeria sp. (strain TM1040) (Silicibacter sp.) protein is Ribosome-recycling factor.